Reading from the N-terminus, the 620-residue chain is Chaperone protein HscA homolog (620 aa).

The protein belongs to the heat shock protein 70 family.

Functionally, chaperone involved in the maturation of iron-sulfur cluster-containing proteins. Has a low intrinsic ATPase activity which is markedly stimulated by HscB. The polypeptide is Chaperone protein HscA homolog (Herminiimonas arsenicoxydans).